We begin with the raw amino-acid sequence, 555 residues long: Hydroxylamine reductase (555 aa).

Residues Cys5, Cys8, Cys17, and Cys23 each contribute to the [4Fe-4S] cluster site. Hybrid [4Fe-2O-2S] cluster-binding residues include His248, Glu272, Cys316, Cys408, Cys436, Cys461, Glu496, and Lys498. Cysteine persulfide is present on Cys408.

It belongs to the HCP family. Requires [4Fe-4S] cluster as cofactor. It depends on hybrid [4Fe-2O-2S] cluster as a cofactor.

The protein resides in the cytoplasm. The catalysed reaction is A + NH4(+) + H2O = hydroxylamine + AH2 + H(+). In terms of biological role, catalyzes the reduction of hydroxylamine to form NH(3) and H(2)O. This chain is Hydroxylamine reductase, found in Halothermothrix orenii (strain H 168 / OCM 544 / DSM 9562).